We begin with the raw amino-acid sequence, 127 residues long: NADPH-dependent 7-cyano-7-deazaguanine reductase (127 aa).

Residue C40 is the Thioimide intermediate of the active site. D47 serves as the catalytic Proton donor. Substrate is bound by residues 62–64 and 81–82; these read VEL and HE.

The protein belongs to the GTP cyclohydrolase I family. QueF type 1 subfamily.

The protein resides in the cytoplasm. It catalyses the reaction 7-aminomethyl-7-carbaguanine + 2 NADP(+) = 7-cyano-7-deazaguanine + 2 NADPH + 3 H(+). It participates in tRNA modification; tRNA-queuosine biosynthesis. In terms of biological role, catalyzes the NADPH-dependent reduction of 7-cyano-7-deazaguanine (preQ0) to 7-aminomethyl-7-deazaguanine (preQ1). In Campylobacter jejuni (strain RM1221), this protein is NADPH-dependent 7-cyano-7-deazaguanine reductase.